We begin with the raw amino-acid sequence, 257 residues long: tRNA pseudouridine synthase A (257 aa).

Asp53 acts as the Nucleophile in catalysis. Position 111 (Tyr111) interacts with substrate.

It belongs to the tRNA pseudouridine synthase TruA family. In terms of assembly, homodimer.

It carries out the reaction uridine(38/39/40) in tRNA = pseudouridine(38/39/40) in tRNA. In terms of biological role, formation of pseudouridine at positions 38, 39 and 40 in the anticodon stem and loop of transfer RNAs. The chain is tRNA pseudouridine synthase A from Xanthomonas axonopodis pv. citri (strain 306).